Reading from the N-terminus, the 276-residue chain is 5-deoxy-glucuronate isomerase (276 aa).

It belongs to the isomerase IolB family.

The enzyme catalyses 5-deoxy-D-glucuronate = 5-dehydro-2-deoxy-D-gluconate. The protein operates within polyol metabolism; myo-inositol degradation into acetyl-CoA; acetyl-CoA from myo-inositol: step 4/7. Involved in the isomerization of 5-deoxy-glucuronate (5DG) to 5-dehydro-2-deoxy-D-gluconate (DKG or 2-deoxy-5-keto-D-gluconate). The sequence is that of 5-deoxy-glucuronate isomerase from Geobacillus kaustophilus (strain HTA426).